A 1025-amino-acid polypeptide reads, in one-letter code: Beta-galactosidase (1025 aa).

The active-site Proton donor is E482. The active-site Nucleophile is the E551.

This sequence belongs to the glycosyl hydrolase 2 family.

It carries out the reaction Hydrolysis of terminal non-reducing beta-D-galactose residues in beta-D-galactosides.. The chain is Beta-galactosidase (LAC4) from Kluyveromyces lactis (strain ATCC 8585 / CBS 2359 / DSM 70799 / NBRC 1267 / NRRL Y-1140 / WM37) (Yeast).